Here is a 534-residue protein sequence, read N- to C-terminus: Multicopper oxidase LPR1 homolog 3 (534 aa).

2 residues coordinate Cu cation: H84 and H86. A glycan (N-linked (GlcNAc...) asparagine) is linked at N109. 2 residues coordinate Cu cation: H133 and H135. Positions 219–291 (PFQAVQRRRY…VDFSLVVNPN (73 aa)) constitute a Plastocyanin-like domain. N-linked (GlcNAc...) asparagine glycosylation is found at N234, N291, N312, N323, N341, and N372. Cu cation-binding residues include H419, H422, and H424. N450 is a glycosylation site (N-linked (GlcNAc...) asparagine). The Cu cation site is built by H515, C516, H517, H521, and M526.

This sequence belongs to the multicopper oxidase family. Requires Cu cation as cofactor. Expressed in roots and basal stems.

It is found in the endoplasmic reticulum membrane. Its function is as follows. Multicopper oxidase that may play a role in the maintenance of inorganic phosphate homeostasis. This Oryza sativa subsp. japonica (Rice) protein is Multicopper oxidase LPR1 homolog 3.